Reading from the N-terminus, the 485-residue chain is Glutamyl-tRNA(Gln) amidotransferase subunit A (485 aa).

Residues lysine 79 and serine 154 each act as charge relay system in the active site. Serine 178 (acyl-ester intermediate) is an active-site residue.

This sequence belongs to the amidase family. GatA subfamily. Heterotrimer of A, B and C subunits.

It carries out the reaction L-glutamyl-tRNA(Gln) + L-glutamine + ATP + H2O = L-glutaminyl-tRNA(Gln) + L-glutamate + ADP + phosphate + H(+). In terms of biological role, allows the formation of correctly charged Gln-tRNA(Gln) through the transamidation of misacylated Glu-tRNA(Gln) in organisms which lack glutaminyl-tRNA synthetase. The reaction takes place in the presence of glutamine and ATP through an activated gamma-phospho-Glu-tRNA(Gln). The sequence is that of Glutamyl-tRNA(Gln) amidotransferase subunit A from Sulfurihydrogenibium sp. (strain YO3AOP1).